The following is a 196-amino-acid chain: Probable peptidyl-prolyl cis-trans isomerase (196 aa).

An N-terminal signal peptide occupies residues 1-26; it reads MSFIRSALAAAAFVALSIGAVQTASA. Residues 29–194 form the PPIase cyclophilin-type domain; the sequence is PENTVILKLK…KIIKATIEAD (166 aa).

This sequence belongs to the cyclophilin-type PPIase family.

The protein resides in the periplasm. It catalyses the reaction [protein]-peptidylproline (omega=180) = [protein]-peptidylproline (omega=0). In terms of biological role, PPIases accelerate the folding of proteins. It catalyzes the cis-trans isomerization of proline imidic peptide bonds in oligopeptides. This chain is Probable peptidyl-prolyl cis-trans isomerase (ppi), found in Brucella abortus (strain 2308).